The chain runs to 143 residues: Endoribonuclease YbeY (143 aa).

Residues His-109, His-113, and His-119 each contribute to the Zn(2+) site.

This sequence belongs to the endoribonuclease YbeY family. It depends on Zn(2+) as a cofactor.

The protein localises to the cytoplasm. Single strand-specific metallo-endoribonuclease involved in late-stage 70S ribosome quality control and in maturation of the 3' terminus of the 16S rRNA. In Neorickettsia sennetsu (strain ATCC VR-367 / Miyayama) (Ehrlichia sennetsu), this protein is Endoribonuclease YbeY.